The following is a 459-amino-acid chain: Ribulose bisphosphate carboxylase (459 aa).

Substrate is bound at residue Asn111. The Proton acceptor role is filled by Lys166. Residue Lys168 participates in substrate binding. Positions 191, 193, and 194 each coordinate Mg(2+). Lys191 carries the N6-carboxylysine modification. His287 acts as the Proton acceptor in catalysis. Residues Arg288, His321, and Ser368 each coordinate substrate.

It belongs to the RuBisCO large chain family. Type II subfamily. In terms of assembly, homodimer. Requires Mg(2+) as cofactor.

It catalyses the reaction 2 (2R)-3-phosphoglycerate + 2 H(+) = D-ribulose 1,5-bisphosphate + CO2 + H2O. The catalysed reaction is D-ribulose 1,5-bisphosphate + O2 = 2-phosphoglycolate + (2R)-3-phosphoglycerate + 2 H(+). RuBisCO catalyzes two reactions: the carboxylation of D-ribulose 1,5-bisphosphate, the primary event in carbon dioxide fixation, as well as the oxidative fragmentation of the pentose substrate. Both reactions occur simultaneously and in competition at the same active site. The protein is Ribulose bisphosphate carboxylase of Paramagnetospirillum magnetotacticum (Aquaspirillum magnetotacticum).